Consider the following 414-residue polypeptide: Chaperone protein dnaJ 39 (414 aa).

Basic and acidic residues predominate over residues 1-24 (MATHSSRSENKDAGEEDELRRRNP). A disordered region spans residues 1–36 (MATHSSRSENKDAGEEDELRRRNPYEVLGIPSNSTD). One can recognise a J domain in the interval 23–88 (NPYEVLGIPS…ENRRLYDTTG (66 aa)). Positions 296–324 (EKESLRSTEAQIVSKRTELLKFEAEYHEV) form a coiled coil. The tract at residues 362 to 395 (TKQGSSKSRSWSKKKSSLLMEPREEGEVAVREEG) is disordered. A compositionally biased stretch (basic and acidic residues) spans 382 to 395 (EPREEGEVAVREEG).

Belongs to the DnaJ family. C/III subfamily. As to expression, expressed constitutively at low levels in seedlings, roots, leaves, stems, flowers and siliques.

The protein localises to the membrane. Plays a continuous role in plant development probably in the structural organization of compartments. Seems to be involved in early gravitropic signal transduction within the gravity-perceiving cells (statocytes). This chain is Chaperone protein dnaJ 39 (ATJ39), found in Arabidopsis thaliana (Mouse-ear cress).